Consider the following 418-residue polypeptide: Tyrosine--tRNA ligase (418 aa).

L-tyrosine is bound at residue Tyr-38. The 'HIGH' region signature appears at 43–52; sequence CTAKSLHVGS. L-tyrosine contacts are provided by Tyr-175 and Gln-179. The 'KMSKS' region motif lies at 235-239; that stretch reads KMGKT. Lys-238 lines the ATP pocket. In terms of domain architecture, S4 RNA-binding spans 348 to 413; sequence LPIIKLLQIS…CGKKRHLKIM (66 aa).

It belongs to the class-I aminoacyl-tRNA synthetase family. TyrS type 1 subfamily. As to quaternary structure, homodimer.

Its subcellular location is the cytoplasm. The enzyme catalyses tRNA(Tyr) + L-tyrosine + ATP = L-tyrosyl-tRNA(Tyr) + AMP + diphosphate + H(+). In terms of biological role, catalyzes the attachment of tyrosine to tRNA(Tyr) in a two-step reaction: tyrosine is first activated by ATP to form Tyr-AMP and then transferred to the acceptor end of tRNA(Tyr). This is Tyrosine--tRNA ligase from Ehrlichia canis (strain Jake).